The primary structure comprises 151 residues: Flagellar assembly factor FliW (151 aa).

This sequence belongs to the FliW family. In terms of assembly, interacts with translational regulator CsrA and flagellin(s).

The protein resides in the cytoplasm. Acts as an anti-CsrA protein, binds CsrA and prevents it from repressing translation of its target genes, one of which is flagellin. Binds to flagellin and participates in the assembly of the flagellum. This chain is Flagellar assembly factor FliW, found in Lachnospira eligens (strain ATCC 27750 / DSM 3376 / VPI C15-48 / C15-B4) (Eubacterium eligens).